Reading from the N-terminus, the 1437-residue chain is Gag-Pol polyprotein (1437 aa).

Residue Gly2 is the site of N-myristoyl glycine; by host attachment. The interaction with Gp41 stretch occupies residues 7-31; that stretch reads VLSGGELDKWEKIRLRPGGKKKYKL. Residues 8–43 are interaction with host CALM1; that stretch reads LSGGELDKWEKIRLRPGGKKKYKLKHIVWASRELER. Positions 12–19 are interaction with host AP3D1; sequence ELDKWEKI. The interaction with membrane phosphatidylinositol 4,5-bisphosphate and RNA stretch occupies residues 14–33; that stretch reads DKWEKIRLRPGGKKKYKLKH. The Nuclear export signal motif lies at 16–22; it reads WEKIRLR. The Nuclear localization signal motif lies at 26 to 32; sequence KKKYKLK. Positions 73–77 are interaction with membrane phosphatidylinositol 4,5-bisphosphate; the sequence is EELRS. Positions 106–129 are disordered; it reads EEQNKSKKKAQQAAAAAGTGNSSQ. Tyr134 bears the Phosphotyrosine; by host mark. The interaction with human PPIA/CYPA and NUP153 stretch occupies residues 191–229; the sequence is NTVGGHQAAMQMLKETINEEAAEWDRVHPVHAGPIAPGQ. A dimerization/Multimerization of capsid protein p24 region spans residues 279–365; that stretch reads YSPTSILDIR…GGPGHKARVL (87 aa). CCHC-type zinc fingers lie at residues 392-409 and 413-430; these read VKCFNCGKEGHIAKNCRA and KGCWRCGREGHQMKDCTE. The segment at 491–495 is dimerization of protease; the sequence is PQITL. Positions 510-579 constitute a Peptidase A2 domain; the sequence is KEALLDTGAD…TPVNIIGRNL (70 aa). Asp515 functions as the For protease activity; shared with dimeric partner in the catalytic mechanism. Dimerization of protease regions lie at residues 539–545 and 578–590; these read GIGGFIK and NLLTQIGCTLNFP. The Reverse transcriptase domain maps to 633 to 823; it reads EGKISKIGPE…PPFLWMGYEL (191 aa). The Mg(2+) site is built by Asp699, Asp774, and Asp775. The RT 'primer grip' stretch occupies residues 816–824; sequence FLWMGYELH. Residues 987–1003 carry the Tryptophan repeat motif motif; the sequence is WEAWWMEYWQATWIPEW. An RNase H type-1 domain is found at 1023-1146; it reads IVGAETFYVD…VDKLVSAGIR (124 aa). Mg(2+)-binding residues include Asp1032, Glu1067, Asp1087, and Asp1138. The Integrase-type zinc finger occupies 1152 to 1193; that stretch reads NGIDKAQEEHEKYHSNWRAMASDFNLPPVVAKEIVASCDKCQ. Positions 1161, 1165, 1189, and 1192 each coordinate Zn(2+). In terms of domain architecture, Integrase catalytic spans 1203–1353; sequence VDCSPGIWQL…SAGERIVDII (151 aa). Residues Asp1213, Asp1265, and Glu1301 each coordinate Mg(2+). Residues 1372 to 1419 constitute a DNA-binding region (integrase-type); the sequence is FRVYYRDNKDPLWKGPAKLLWKGEGAVVIQDNSDIKVVPRRKAKIIRD.

In terms of assembly, homotrimer; further assembles as hexamers of trimers. Interacts with gp41 (via C-terminus). Interacts with host CALM1; this interaction induces a conformational change in the Matrix protein, triggering exposure of the myristate group. Interacts with host AP3D1; this interaction allows the polyprotein trafficking to multivesicular bodies during virus assembly. Part of the pre-integration complex (PIC) which is composed of viral genome, matrix protein, Vpr and integrase. Homodimer; the homodimer further multimerizes as homohexamers or homopentamers. Interacts with human PPIA/CYPA; This interaction stabilizes the capsid. Interacts with human NUP153. Interacts with host PDZD8; this interaction stabilizes the capsid. Interacts with monkey TRIM5; this interaction destabilizes the capsid. As to quaternary structure, homodimer, whose active site consists of two apposed aspartic acid residues. In terms of assembly, heterodimer of p66 RT and p51 RT (RT p66/p51). Heterodimerization of RT is essential for DNA polymerase activity. The overall folding of the subdomains is similar in p66 RT and p51 RT but the spatial arrangements of the subdomains are dramatically different. Homotetramer; may further associate as a homohexadecamer. Part of the pre-integration complex (PIC) which is composed of viral genome, matrix protein, Vpr and integrase. Interacts with human SMARCB1/INI1 and human PSIP1/LEDGF isoform 1. Interacts with human KPNA3; this interaction might play a role in nuclear import of the pre-integration complex. Interacts with human NUP153; this interaction might play a role in nuclear import of the pre-integration complex. The cofactor is Mg(2+). Specific enzymatic cleavages by the viral protease yield mature proteins. The protease is released by autocatalytic cleavage. The polyprotein is cleaved during and after budding, this process is termed maturation. Proteolytic cleavage of p66 RT removes the RNase H domain to yield the p51 RT subunit. Nucleocapsid protein p7 might be further cleaved after virus entry. Post-translationally, tyrosine phosphorylated presumably in the virion by a host kinase. Phosphorylation is apparently not a major regulator of membrane association. In terms of processing, phosphorylated possibly by host MAPK1; this phosphorylation is necessary for Pin1-mediated virion uncoating. Methylated by host PRMT6, impairing its function by reducing RNA annealing and the initiation of reverse transcription.

Its subcellular location is the host cell membrane. It is found in the host endosome. The protein resides in the host multivesicular body. The protein localises to the virion membrane. It localises to the host nucleus. Its subcellular location is the host cytoplasm. It is found in the virion. The catalysed reaction is Specific for a P1 residue that is hydrophobic, and P1' variable, but often Pro.. It catalyses the reaction Endohydrolysis of RNA in RNA/DNA hybrids. Three different cleavage modes: 1. sequence-specific internal cleavage of RNA. Human immunodeficiency virus type 1 and Moloney murine leukemia virus enzymes prefer to cleave the RNA strand one nucleotide away from the RNA-DNA junction. 2. RNA 5'-end directed cleavage 13-19 nucleotides from the RNA end. 3. DNA 3'-end directed cleavage 15-20 nucleotides away from the primer terminus.. The enzyme catalyses 3'-end directed exonucleolytic cleavage of viral RNA-DNA hybrid.. It carries out the reaction DNA(n) + a 2'-deoxyribonucleoside 5'-triphosphate = DNA(n+1) + diphosphate. Protease: The viral protease is inhibited by many synthetic protease inhibitors (PIs), such as amprenavir, atazanavir, indinavir, loprinavir, nelfinavir, ritonavir and saquinavir. Use of protease inhibitors in tritherapy regimens permit more ambitious therapeutic strategies. Reverse transcriptase/ribonuclease H: RT can be inhibited either by nucleoside RT inhibitors (NRTIs) or by non nucleoside RT inhibitors (NNRTIs). NRTIs act as chain terminators, whereas NNRTIs inhibit DNA polymerization by binding a small hydrophobic pocket near the RT active site and inducing an allosteric change in this region. Classical NRTIs are abacavir, adefovir (PMEA), didanosine (ddI), lamivudine (3TC), stavudine (d4T), tenofovir (PMPA), zalcitabine (ddC), and zidovudine (AZT). Classical NNRTIs are atevirdine (BHAP U-87201E), delavirdine, efavirenz (DMP-266), emivirine (I-EBU), and nevirapine (BI-RG-587). The tritherapies used as a basic effective treatment of AIDS associate two NRTIs and one NNRTI. Its function is as follows. Mediates, with Gag polyprotein, the essential events in virion assembly, including binding the plasma membrane, making the protein-protein interactions necessary to create spherical particles, recruiting the viral Env proteins, and packaging the genomic RNA via direct interactions with the RNA packaging sequence (Psi). Gag-Pol polyprotein may regulate its own translation, by the binding genomic RNA in the 5'-UTR. At low concentration, the polyprotein would promote translation, whereas at high concentration, the polyprotein would encapsidate genomic RNA and then shut off translation. In terms of biological role, targets the polyprotein to the plasma membrane via a multipartite membrane-binding signal, that includes its myristoylated N-terminus. Matrix protein is part of the pre-integration complex. Implicated in the release from host cell mediated by Vpu. Binds to RNA. Forms the conical core that encapsulates the genomic RNA-nucleocapsid complex in the virion. Most core are conical, with only 7% tubular. The core is constituted by capsid protein hexamer subunits. The core is disassembled soon after virion entry. Host restriction factors such as TRIM5-alpha or TRIMCyp bind retroviral capsids and cause premature capsid disassembly, leading to blocks in reverse transcription. Capsid restriction by TRIM5 is one of the factors which restricts HIV-1 to the human species. Host PIN1 apparently facilitates the virion uncoating. On the other hand, interactions with PDZD8 or CYPA stabilize the capsid. Functionally, encapsulates and protects viral dimeric unspliced genomic RNA (gRNA). Binds these RNAs through its zinc fingers. Acts as a nucleic acid chaperone which is involved in rearangement of nucleic acid secondary structure during gRNA retrotranscription. Also facilitates template switch leading to recombination. As part of the polyprotein, participates in gRNA dimerization, packaging, tRNA incorporation and virion assembly. Its function is as follows. Aspartyl protease that mediates proteolytic cleavages of Gag and Gag-Pol polyproteins during or shortly after the release of the virion from the plasma membrane. Cleavages take place as an ordered, step-wise cascade to yield mature proteins. This process is called maturation. Displays maximal activity during the budding process just prior to particle release from the cell. Also cleaves Nef and Vif, probably concomitantly with viral structural proteins on maturation of virus particles. Hydrolyzes host EIF4GI and PABP1 in order to shut off the capped cellular mRNA translation. The resulting inhibition of cellular protein synthesis serves to ensure maximal viral gene expression and to evade host immune response. Also mediates cleavage of host YTHDF3. Mediates cleavage of host CARD8, thereby activating the CARD8 inflammasome, leading to the clearance of latent HIV-1 in patient CD4(+) T-cells after viral reactivation; in contrast, HIV-1 can evade CARD8-sensing when its protease remains inactive in infected cells prior to viral budding. In terms of biological role, multifunctional enzyme that converts the viral RNA genome into dsDNA in the cytoplasm, shortly after virus entry into the cell. This enzyme displays a DNA polymerase activity that can copy either DNA or RNA templates, and a ribonuclease H (RNase H) activity that cleaves the RNA strand of RNA-DNA heteroduplexes in a partially processive 3' to 5' endonucleasic mode. Conversion of viral genomic RNA into dsDNA requires many steps. A tRNA(3)-Lys binds to the primer-binding site (PBS) situated at the 5'-end of the viral RNA. RT uses the 3' end of the tRNA primer to perform a short round of RNA-dependent minus-strand DNA synthesis. The reading proceeds through the U5 region and ends after the repeated (R) region which is present at both ends of viral RNA. The portion of the RNA-DNA heteroduplex is digested by the RNase H, resulting in a ssDNA product attached to the tRNA primer. This ssDNA/tRNA hybridizes with the identical R region situated at the 3' end of viral RNA. This template exchange, known as minus-strand DNA strong stop transfer, can be either intra- or intermolecular. RT uses the 3' end of this newly synthesized short ssDNA to perform the RNA-dependent minus-strand DNA synthesis of the whole template. RNase H digests the RNA template except for two polypurine tracts (PPTs) situated at the 5'-end and near the center of the genome. It is not clear if both polymerase and RNase H activities are simultaneous. RNase H probably can proceed both in a polymerase-dependent (RNA cut into small fragments by the same RT performing DNA synthesis) and a polymerase-independent mode (cleavage of remaining RNA fragments by free RTs). Secondly, RT performs DNA-directed plus-strand DNA synthesis using the PPTs that have not been removed by RNase H as primers. PPTs and tRNA primers are then removed by RNase H. The 3' and 5' ssDNA PBS regions hybridize to form a circular dsDNA intermediate. Strand displacement synthesis by RT to the PBS and PPT ends produces a blunt ended, linear dsDNA copy of the viral genome that includes long terminal repeats (LTRs) at both ends. Catalyzes viral DNA integration into the host chromosome, by performing a series of DNA cutting and joining reactions. This enzyme activity takes place after virion entry into a cell and reverse transcription of the RNA genome in dsDNA. The first step in the integration process is 3' processing. This step requires a complex comprising the viral genome, matrix protein, Vpr and integrase. This complex is called the pre-integration complex (PIC). The integrase protein removes 2 nucleotides from each 3' end of the viral DNA, leaving recessed CA OH's at the 3' ends. In the second step, the PIC enters cell nucleus. This process is mediated through integrase and Vpr proteins, and allows the virus to infect a non dividing cell. This ability to enter the nucleus is specific of lentiviruses, other retroviruses cannot and rely on cell division to access cell chromosomes. In the third step, termed strand transfer, the integrase protein joins the previously processed 3' ends to the 5' ends of strands of target cellular DNA at the site of integration. The 5'-ends are produced by integrase-catalyzed staggered cuts, 5 bp apart. A Y-shaped, gapped, recombination intermediate results, with the 5'-ends of the viral DNA strands and the 3' ends of target DNA strands remaining unjoined, flanking a gap of 5 bp. The last step is viral DNA integration into host chromosome. This involves host DNA repair synthesis in which the 5 bp gaps between the unjoined strands are filled in and then ligated. Since this process occurs at both cuts flanking the HIV genome, a 5 bp duplication of host DNA is produced at the ends of HIV-1 integration. Alternatively, Integrase may catalyze the excision of viral DNA just after strand transfer, this is termed disintegration. This chain is Gag-Pol polyprotein (gag-pol), found in Human immunodeficiency virus type 1 group M subtype B (isolate ARV2/SF2) (HIV-1).